Here is a 673-residue protein sequence, read N- to C-terminus: UvrABC system protein B (673 aa).

Residues 30–417 (NSILLGNKYQ…SSVVVDQIIR (388 aa)) form the Helicase ATP-binding domain. 43–50 (GVTGSGKT) lines the ATP pocket. The Beta-hairpin motif lies at 96–119 (YYDYYQPESYVPSKDLFIEKEATI). Residues 434 to 600 (QMEDLYSEIQ…TIVKKIQNIL (167 aa)) form the Helicase C-terminal domain. The UVR domain maps to 627–662 (KKLIDKLKFDLEEAVNDERFEDAIVLRDKIKELSSK).

It belongs to the UvrB family. As to quaternary structure, forms a heterotetramer with UvrA during the search for lesions. Interacts with UvrC in an incision complex.

Its subcellular location is the cytoplasm. Its function is as follows. The UvrABC repair system catalyzes the recognition and processing of DNA lesions. A damage recognition complex composed of 2 UvrA and 2 UvrB subunits scans DNA for abnormalities. Upon binding of the UvrA(2)B(2) complex to a putative damaged site, the DNA wraps around one UvrB monomer. DNA wrap is dependent on ATP binding by UvrB and probably causes local melting of the DNA helix, facilitating insertion of UvrB beta-hairpin between the DNA strands. Then UvrB probes one DNA strand for the presence of a lesion. If a lesion is found the UvrA subunits dissociate and the UvrB-DNA preincision complex is formed. This complex is subsequently bound by UvrC and the second UvrB is released. If no lesion is found, the DNA wraps around the other UvrB subunit that will check the other stand for damage. This is UvrABC system protein B from Borreliella burgdorferi (strain ATCC 35210 / DSM 4680 / CIP 102532 / B31) (Borrelia burgdorferi).